Consider the following 105-residue polypeptide: Urease subunit beta (105 aa).

This sequence belongs to the urease beta subunit family. As to quaternary structure, heterotrimer of UreA (gamma), UreB (beta) and UreC (alpha) subunits. Three heterotrimers associate to form the active enzyme.

The protein resides in the cytoplasm. It carries out the reaction urea + 2 H2O + H(+) = hydrogencarbonate + 2 NH4(+). The protein operates within nitrogen metabolism; urea degradation; CO(2) and NH(3) from urea (urease route): step 1/1. This chain is Urease subunit beta, found in Prochlorococcus marinus (strain MIT 9313).